The chain runs to 122 residues: Large ribosomal subunit protein uL14 (122 aa).

It belongs to the universal ribosomal protein uL14 family. Part of the 50S ribosomal subunit. Forms a cluster with proteins L3 and L19. In the 70S ribosome, L14 and L19 interact and together make contacts with the 16S rRNA in bridges B5 and B8.

Functionally, binds to 23S rRNA. Forms part of two intersubunit bridges in the 70S ribosome. The protein is Large ribosomal subunit protein uL14 of Anaeromyxobacter sp. (strain Fw109-5).